A 234-amino-acid chain; its full sequence is 2,3,4,5-tetrahydropyridine-2,6-dicarboxylate N-acetyltransferase (234 aa).

This sequence belongs to the transferase hexapeptide repeat family. DapH subfamily.

It carries out the reaction (S)-2,3,4,5-tetrahydrodipicolinate + acetyl-CoA + H2O = L-2-acetamido-6-oxoheptanedioate + CoA. It functions in the pathway amino-acid biosynthesis; L-lysine biosynthesis via DAP pathway; LL-2,6-diaminopimelate from (S)-tetrahydrodipicolinate (acetylase route): step 1/3. Its function is as follows. Catalyzes the transfer of an acetyl group from acetyl-CoA to tetrahydrodipicolinate. The polypeptide is 2,3,4,5-tetrahydropyridine-2,6-dicarboxylate N-acetyltransferase (Ligilactobacillus salivarius (strain UCC118) (Lactobacillus salivarius)).